The chain runs to 95 residues: Acylphosphatase (95 aa).

The Acylphosphatase-like domain occupies 10–95 (CIHATVSGKV…VEDYSDFRVR (86 aa)). Active-site residues include R25 and N43.

The protein belongs to the acylphosphatase family.

The enzyme catalyses an acyl phosphate + H2O = a carboxylate + phosphate + H(+). In Coxiella burnetii (strain Dugway 5J108-111), this protein is Acylphosphatase (acyP).